The chain runs to 122 residues: Large ribosomal subunit protein uL14 (122 aa).

This sequence belongs to the universal ribosomal protein uL14 family. As to quaternary structure, part of the 50S ribosomal subunit. Forms a cluster with proteins L3 and L19. In the 70S ribosome, L14 and L19 interact and together make contacts with the 16S rRNA in bridges B5 and B8.

In terms of biological role, binds to 23S rRNA. Forms part of two intersubunit bridges in the 70S ribosome. This Syntrophomonas wolfei subsp. wolfei (strain DSM 2245B / Goettingen) protein is Large ribosomal subunit protein uL14.